A 621-amino-acid chain; its full sequence is tRNA uridine 5-carboxymethylaminomethyl modification enzyme MnmG (621 aa).

An FAD-binding site is contributed by 8–13 (GAGHAG). NAD(+) is bound at residue 269-283 (GPRYCPSVEDKIFRF).

This sequence belongs to the MnmG family. Homodimer. Heterotetramer of two MnmE and two MnmG subunits. The cofactor is FAD.

The protein resides in the cytoplasm. Functionally, NAD-binding protein involved in the addition of a carboxymethylaminomethyl (cmnm) group at the wobble position (U34) of certain tRNAs, forming tRNA-cmnm(5)s(2)U34. This Chlorobium phaeobacteroides (strain DSM 266 / SMG 266 / 2430) protein is tRNA uridine 5-carboxymethylaminomethyl modification enzyme MnmG.